The sequence spans 309 residues: Ornithine carbamoyltransferase (309 aa).

Residues 51–54, Gln-78, Arg-102, and 129–132 each bind carbamoyl phosphate; these read STRT and HPCQ. L-ornithine-binding positions include Asn-161, Asp-225, and 229 to 230; that span reads SM. Residues 265–266 and Arg-293 contribute to the carbamoyl phosphate site; that span reads CL.

Belongs to the aspartate/ornithine carbamoyltransferase superfamily. OTCase family.

The protein localises to the cytoplasm. The enzyme catalyses carbamoyl phosphate + L-ornithine = L-citrulline + phosphate + H(+). It functions in the pathway amino-acid biosynthesis; L-arginine biosynthesis; L-arginine from L-ornithine and carbamoyl phosphate: step 1/3. Reversibly catalyzes the transfer of the carbamoyl group from carbamoyl phosphate (CP) to the N(epsilon) atom of ornithine (ORN) to produce L-citrulline. This Mycolicibacterium paratuberculosis (strain ATCC BAA-968 / K-10) (Mycobacterium paratuberculosis) protein is Ornithine carbamoyltransferase.